Here is a 154-residue protein sequence, read N- to C-terminus: SsrA-binding protein (154 aa).

The protein belongs to the SmpB family.

Its subcellular location is the cytoplasm. Its function is as follows. Required for rescue of stalled ribosomes mediated by trans-translation. Binds to transfer-messenger RNA (tmRNA), required for stable association of tmRNA with ribosomes. tmRNA and SmpB together mimic tRNA shape, replacing the anticodon stem-loop with SmpB. tmRNA is encoded by the ssrA gene; the 2 termini fold to resemble tRNA(Ala) and it encodes a 'tag peptide', a short internal open reading frame. During trans-translation Ala-aminoacylated tmRNA acts like a tRNA, entering the A-site of stalled ribosomes, displacing the stalled mRNA. The ribosome then switches to translate the ORF on the tmRNA; the nascent peptide is terminated with the 'tag peptide' encoded by the tmRNA and targeted for degradation. The ribosome is freed to recommence translation, which seems to be the essential function of trans-translation. The chain is SsrA-binding protein from Gluconacetobacter diazotrophicus (strain ATCC 49037 / DSM 5601 / CCUG 37298 / CIP 103539 / LMG 7603 / PAl5).